Here is a 207-residue protein sequence, read N- to C-terminus: 5-amino-6-(5-phosphoribosylamino)uracil reductase (207 aa).

S6 provides a ligand contact to substrate. An NADP(+)-binding site is contributed by W8. R22 provides a ligand contact to substrate. D38 is an NADP(+) binding site. Residues L42 and R45 each contribute to the substrate site. Residue S72 coordinates NADP(+). Residue E137 participates in substrate binding.

Belongs to the HTP reductase family.

It catalyses the reaction 5-amino-6-(5-phospho-D-ribitylamino)uracil + NADP(+) = 5-amino-6-(5-phospho-D-ribosylamino)uracil + NADPH + H(+). The protein operates within cofactor biosynthesis; riboflavin biosynthesis; 5-amino-6-(D-ribitylamino)uracil from GTP: step 3/4. The protein is 5-amino-6-(5-phosphoribosylamino)uracil reductase (ribD2) of Buchnera aphidicola subsp. Acyrthosiphon pisum (strain APS) (Acyrthosiphon pisum symbiotic bacterium).